The primary structure comprises 630 residues: Golgin subfamily A member 8K (630 aa).

The segment at 1 to 76 is disordered; that stretch reads MAEETQHNKL…TSSATLKDLE (76 aa). 2 coiled-coil regions span residues 86 to 148 and 224 to 411; these read LDSR…LNTD and LTQL…QQNQ. Residues 352-362 are compositionally biased toward basic and acidic residues; sequence KQEERIQEQHK. 2 disordered regions span residues 352 to 379 and 424 to 444; these read KQEE…EPNN and GEGH…PMPS.

It belongs to the GOLGA8 family.

In Homo sapiens (Human), this protein is Golgin subfamily A member 8K.